A 115-amino-acid chain; its full sequence is NADH-ubiquinone oxidoreductase chain 3 (115 aa).

The next 3 helical transmembrane spans lie at 4–24 (IMVISVNIILSSTLILVAFWL), 55–75 (FFLVAITFLLFDLEIALLLPI), and 86–106 (TMMLTAFILVSILALGLAYEW).

The protein belongs to the complex I subunit 3 family. As to quaternary structure, core subunit of respiratory chain NADH dehydrogenase (Complex I) which is composed of 45 different subunits. Interacts with TMEM186. Interacts with TMEM242.

The protein localises to the mitochondrion inner membrane. The enzyme catalyses a ubiquinone + NADH + 5 H(+)(in) = a ubiquinol + NAD(+) + 4 H(+)(out). Core subunit of the mitochondrial membrane respiratory chain NADH dehydrogenase (Complex I) which catalyzes electron transfer from NADH through the respiratory chain, using ubiquinone as an electron acceptor. Essential for the catalytic activity of complex I. This is NADH-ubiquinone oxidoreductase chain 3 from Baiomys taylori (Northern pygmy mouse).